The sequence spans 231 residues: Probable glutathione S-transferase (231 aa).

The GST N-terminal domain maps to 4–96 (PNFELYGYFR…YLEEALPTNA (93 aa)). Glutathione-binding positions include serine 14, glutamine 43, valine 57, 80–81 (QS), glutamine 124, and 128–130 (NLK). Residues 105–227 (NPVARAHVRT…HWQKQEDTPE (123 aa)) form the GST C-terminal domain.

This sequence belongs to the GST superfamily. Zeta family. As to quaternary structure, homodimer.

The catalysed reaction is RX + glutathione = an S-substituted glutathione + a halide anion + H(+). Its function is as follows. Probable glutathione S-transferase. The sequence is that of Probable glutathione S-transferase from Coccidioides immitis (strain RS) (Valley fever fungus).